We begin with the raw amino-acid sequence, 851 residues long: MAKTNISPGMQQYLDIKKDYPDAFLLFRMGDFYELFYDDAVKAAQLLEIGLTSRNKNAENPIPMAGVPHHSAQQYIDVLIELGYKVAVAEQMEDPKQAVGVVKREVVQVITPGTVVDSAKPDSANNFLVAVDFDGCRYGLAYMDVSTGEFCVTDLADFTSVRSEIQNLKAKEVLLGFDLSEEEQTILVKQMNLLLSYEETVYEDKSLIDGQLTTVELTAAGKLLQYVHKTQMRELSHLQALVHYEIKDYLQMSYATKSSLDLVENARTNKKHGSLYWLLDETKTAMGMRLLRSWIDRPLVSKEAILERQEIIQVFLNAFIERTDLSNSLKGVYDIERLSSRVSFGKANPKDLLQLGHTLAQVPYIKAILESFDSPCVDKLVNDIDSLPELEYLIRTAIDPDAPATISEGSIIRTGFDERLDHYRKVMREGTGWIADIEAKERQASGINNLKIDYNKKDGYYFHVTTSNLSLVPEHFFRKATLKNSERYGTAELAKIEGQMLEAREESSSLEYDIFMCIRAQVETYINRLQKLAKILATVDVLQSLAVVAETNHYIRPQFNDNHVITIQEGRHAVVEKVMGVQEYIPNSISFDQQTSIQLITGPNMSGKSTYMRQLALTVIMAQMGSFVAADHVDLPLFDAIFTRIGAADDLISGQSTFMVEMMEANQAIKRASDNSLILFDELGRGTATYDGMALAQAIIEYIHDRVGAKTIFATHYHELTDLSTKLTSLVNVHVATLEKDGDVTFLHKIAEGPADKSYGIHVAKIAGLPKSLLKRADEVLTRLETQSRSTEIMSVPPQVESSSAVRQGQLSLFGDEEKAHEIRQALEAIDVMNMTPLQAMTTLYELKKLL.

602–609 (GPNMSGKS) contributes to the ATP binding site.

This sequence belongs to the DNA mismatch repair MutS family.

Functionally, this protein is involved in the repair of mismatches in DNA. It is possible that it carries out the mismatch recognition step. This protein has a weak ATPase activity. This chain is DNA mismatch repair protein MutS, found in Streptococcus pyogenes serotype M6 (strain ATCC BAA-946 / MGAS10394).